The following is a 335-amino-acid chain: DNA-directed RNA polymerase subunit alpha (335 aa).

The alpha N-terminal domain (alpha-NTD) stretch occupies residues 1–231; the sequence is MVREKITVST…DLLIPFLHTK (231 aa). The tract at residues 263 to 335 is alpha C-terminal domain (alpha-CTD); sequence KKMALKSIFI…FVIDLPKNKF (73 aa).

Belongs to the RNA polymerase alpha chain family. In terms of assembly, in plastids the minimal PEP RNA polymerase catalytic core is composed of four subunits: alpha, beta, beta', and beta''. When a (nuclear-encoded) sigma factor is associated with the core the holoenzyme is formed, which can initiate transcription.

It is found in the plastid. It localises to the chloroplast. The catalysed reaction is RNA(n) + a ribonucleoside 5'-triphosphate = RNA(n+1) + diphosphate. Its function is as follows. DNA-dependent RNA polymerase catalyzes the transcription of DNA into RNA using the four ribonucleoside triphosphates as substrates. This is DNA-directed RNA polymerase subunit alpha from Lactuca sativa (Garden lettuce).